We begin with the raw amino-acid sequence, 302 residues long: Deoxyhypusine hydroxylase-B (302 aa).

HEAT-like PBS-type repeat units follow at residues 49 to 75 (LAHEAAFALGQMQDAEAIPALEAVLKD), 82 to 108 (VRHEAAEALGAIGLEKSISLLEESLAV), 171 to 200 (MYERYAALFALRNDSGDAAVSAIVAALGVK), 204 to 230 (LRHEVAYVLGQLQNKAASDALSTVLKN), and 237 to 263 (VRHEAAEALGSIADQESIALLEEFAKD). Positions 51, 52, 84, and 85 each coordinate Fe cation. Fe cation contacts are provided by His206, Glu207, His239, and Glu240.

The protein belongs to the deoxyhypusine hydroxylase family. It depends on Fe(2+) as a cofactor.

The catalysed reaction is [eIF5A protein]-deoxyhypusine + AH2 + O2 = [eIF5A protein]-hypusine + A + H2O. The protein operates within protein modification; eIF5A hypusination. Its function is as follows. Catalyzes the hydroxylation of the N(6)-(4-aminobutyl)-L-lysine intermediate to form hypusine, an essential post-translational modification only found in mature eIF-5A factor. This chain is Deoxyhypusine hydroxylase-B, found in Oryza sativa subsp. japonica (Rice).